The following is a 133-amino-acid chain: Ribonuclease P protein component (133 aa).

Belongs to the RnpA family. In terms of assembly, consists of a catalytic RNA component (M1 or rnpB) and a protein subunit.

The enzyme catalyses Endonucleolytic cleavage of RNA, removing 5'-extranucleotides from tRNA precursor.. Its function is as follows. RNaseP catalyzes the removal of the 5'-leader sequence from pre-tRNA to produce the mature 5'-terminus. It can also cleave other RNA substrates such as 4.5S RNA. The protein component plays an auxiliary but essential role in vivo by binding to the 5'-leader sequence and broadening the substrate specificity of the ribozyme. The protein is Ribonuclease P protein component of Pseudomonas fluorescens (strain Pf0-1).